A 336-amino-acid polypeptide reads, in one-letter code: tRNA N6-adenosine threonylcarbamoyltransferase (336 aa).

Fe cation contacts are provided by histidine 108 and histidine 112. Residues 129 to 133 (LISGG), aspartate 161, glutamate 178, and serine 258 each bind substrate. Aspartate 286 contacts Fe cation.

This sequence belongs to the KAE1 / TsaD family. Requires Fe(2+) as cofactor.

It localises to the cytoplasm. The catalysed reaction is L-threonylcarbamoyladenylate + adenosine(37) in tRNA = N(6)-L-threonylcarbamoyladenosine(37) in tRNA + AMP + H(+). Functionally, required for the formation of a threonylcarbamoyl group on adenosine at position 37 (t(6)A37) in tRNAs that read codons beginning with adenine. Is probably involved in the transfer of the threonylcarbamoyl moiety of threonylcarbamoyl-AMP (TC-AMP) to the N6 group of A37. The polypeptide is tRNA N6-adenosine threonylcarbamoyltransferase (Pyrobaculum neutrophilum (strain DSM 2338 / JCM 9278 / NBRC 100436 / V24Sta) (Thermoproteus neutrophilus)).